The sequence spans 564 residues: Dihydroxy-acid dehydratase (564 aa).

Residue C51 participates in [2Fe-2S] cluster binding. D83 lines the Mg(2+) pocket. Residue C124 participates in [2Fe-2S] cluster binding. Positions 125 and 126 each coordinate Mg(2+). K126 carries the N6-carboxylysine modification. A [2Fe-2S] cluster-binding site is contributed by C196. A Mg(2+)-binding site is contributed by E448. S474 serves as the catalytic Proton acceptor.

It belongs to the IlvD/Edd family. Homodimer. Requires [2Fe-2S] cluster as cofactor. Mg(2+) is required as a cofactor.

The catalysed reaction is (2R)-2,3-dihydroxy-3-methylbutanoate = 3-methyl-2-oxobutanoate + H2O. It catalyses the reaction (2R,3R)-2,3-dihydroxy-3-methylpentanoate = (S)-3-methyl-2-oxopentanoate + H2O. Its pathway is amino-acid biosynthesis; L-isoleucine biosynthesis; L-isoleucine from 2-oxobutanoate: step 3/4. It functions in the pathway amino-acid biosynthesis; L-valine biosynthesis; L-valine from pyruvate: step 3/4. Functionally, functions in the biosynthesis of branched-chain amino acids. Catalyzes the dehydration of (2R,3R)-2,3-dihydroxy-3-methylpentanoate (2,3-dihydroxy-3-methylvalerate) into 2-oxo-3-methylpentanoate (2-oxo-3-methylvalerate) and of (2R)-2,3-dihydroxy-3-methylbutanoate (2,3-dihydroxyisovalerate) into 2-oxo-3-methylbutanoate (2-oxoisovalerate), the penultimate precursor to L-isoleucine and L-valine, respectively. This Pyrobaculum calidifontis (strain DSM 21063 / JCM 11548 / VA1) protein is Dihydroxy-acid dehydratase.